We begin with the raw amino-acid sequence, 94 residues long: Small ribosomal subunit protein uS19 (94 aa).

It belongs to the universal ribosomal protein uS19 family.

Functionally, protein S19 forms a complex with S13 that binds strongly to the 16S ribosomal RNA. This chain is Small ribosomal subunit protein uS19, found in Buchnera aphidicola subsp. Cinara cedri (strain Cc).